Consider the following 564-residue polypeptide: NAD-dependent malic enzyme (564 aa).

The Proton donor role is filled by Tyr102. Residue Arg155 participates in NAD(+) binding. Residue Lys173 is the Proton acceptor of the active site. Positions 244, 245, and 268 each coordinate a divalent metal cation. NAD(+) is bound by residues Asp268 and Asn417.

It belongs to the malic enzymes family. In terms of assembly, homotetramer. Mg(2+) serves as cofactor. It depends on Mn(2+) as a cofactor.

The enzyme catalyses (S)-malate + NAD(+) = pyruvate + CO2 + NADH. It catalyses the reaction oxaloacetate + H(+) = pyruvate + CO2. This Pseudomonas aeruginosa (strain ATCC 15692 / DSM 22644 / CIP 104116 / JCM 14847 / LMG 12228 / 1C / PRS 101 / PAO1) protein is NAD-dependent malic enzyme.